The chain runs to 339 residues: Fructose-1,6-bisphosphatase class 1 (339 aa).

Mg(2+)-binding residues include E91, D113, L115, and D116. Residues 116 to 119 (DGSS), N208, and K274 each bind substrate. E280 is a binding site for Mg(2+).

Belongs to the FBPase class 1 family. Homotetramer. Mg(2+) is required as a cofactor.

It is found in the cytoplasm. It catalyses the reaction beta-D-fructose 1,6-bisphosphate + H2O = beta-D-fructose 6-phosphate + phosphate. It functions in the pathway carbohydrate biosynthesis; gluconeogenesis. This Cupriavidus pinatubonensis (strain JMP 134 / LMG 1197) (Cupriavidus necator (strain JMP 134)) protein is Fructose-1,6-bisphosphatase class 1.